A 444-amino-acid polypeptide reads, in one-letter code: MFS-type transporter dbaD (444 aa).

Over residues 1 to 13 the composition is skewed to polar residues; it reads MTEQPPQNHSVDL. The interval 1–57 is disordered; the sequence is MTEQPPQNHSVDLNQNEDNNENDYRSSSATDAERPCEPKIEESTAKPPTGPPAPPPP. N-linked (GlcNAc...) asparagine glycosylation occurs at Asn-8. Basic and acidic residues predominate over residues 31-44; that stretch reads DAERPCEPKIEEST. Positions 48–57 are enriched in pro residues; it reads PTGPPAPPPP. The next 11 membrane-spanning stretches (helical) occupy residues 62-82, 107-127, 134-154, 159-179, 192-212, 223-243, 267-287, 301-323, 330-350, 356-376, and 394-414; these read LVAW…WGIM, WIGS…GSIY, ALLV…SLCK, VLLA…VPCV, TALG…PIVL, WSVR…IAVM, MAFT…LFYI, MAFY…PNAM, FNLI…LLAV, LIVI…LPPL, and MGFG…GAIL. Asn-421 carries an N-linked (GlcNAc...) asparagine glycan. A helical membrane pass occupies residues 424–444; sequence GLWVYGGVTSLVAGFIICIAV.

Belongs to the major facilitator superfamily. Monocarboxylate porter (TC 2.A.1.13) family.

The protein localises to the cell membrane. Functionally, MFS-type transporter; part of the gene cluster that mediates the biosynthesis of the antibiotic 2,4- dihydroxy-3-methyl-6-(2-oxopropyl)benzaldehyde (DHMBA) and its derivatives. Is probably involved in the transport of the metabolites to the environment. The protein is MFS-type transporter dbaD of Emericella nidulans (strain FGSC A4 / ATCC 38163 / CBS 112.46 / NRRL 194 / M139) (Aspergillus nidulans).